We begin with the raw amino-acid sequence, 86 residues long: Small ribosomal subunit protein uS17 (86 aa).

This sequence belongs to the universal ribosomal protein uS17 family. As to quaternary structure, part of the 30S ribosomal subunit.

Functionally, one of the primary rRNA binding proteins, it binds specifically to the 5'-end of 16S ribosomal RNA. The polypeptide is Small ribosomal subunit protein uS17 (Halorhodospira halophila (strain DSM 244 / SL1) (Ectothiorhodospira halophila (strain DSM 244 / SL1))).